The chain runs to 427 residues: Serine--tRNA ligase (427 aa).

An L-serine-binding site is contributed by 231–233 (TAE). 262 to 264 (RSE) is an ATP binding site. An L-serine-binding site is contributed by Glu285. 349–352 (EISS) serves as a coordination point for ATP. Ser385 provides a ligand contact to L-serine.

Belongs to the class-II aminoacyl-tRNA synthetase family. Type-1 seryl-tRNA synthetase subfamily. As to quaternary structure, homodimer. The tRNA molecule binds across the dimer.

It is found in the cytoplasm. It catalyses the reaction tRNA(Ser) + L-serine + ATP = L-seryl-tRNA(Ser) + AMP + diphosphate + H(+). The enzyme catalyses tRNA(Sec) + L-serine + ATP = L-seryl-tRNA(Sec) + AMP + diphosphate + H(+). It participates in aminoacyl-tRNA biosynthesis; selenocysteinyl-tRNA(Sec) biosynthesis; L-seryl-tRNA(Sec) from L-serine and tRNA(Sec): step 1/1. Catalyzes the attachment of serine to tRNA(Ser). Is also able to aminoacylate tRNA(Sec) with serine, to form the misacylated tRNA L-seryl-tRNA(Sec), which will be further converted into selenocysteinyl-tRNA(Sec). This is Serine--tRNA ligase from Rhizobium rhizogenes (strain K84 / ATCC BAA-868) (Agrobacterium radiobacter).